The following is an 850-amino-acid chain: Translation initiation factor IF-2 (850 aa).

Disordered regions lie at residues Leu-50–Ser-72 and Phe-92–Val-267. The span at Ser-96 to Arg-135 shows a compositional bias: basic and acidic residues. The segment covering Arg-136 to Asp-172 has biased composition (low complexity). Basic and acidic residues-rich tracts occupy residues Ala-173 to Ala-210 and Thr-234 to Arg-243. Over residues Arg-244–Gln-257 the composition is skewed to basic residues. The region spanning Ser-350–Glu-517 is the tr-type G domain. The G1 stretch occupies residues Gly-359 to Thr-366. Gly-359–Thr-366 serves as a coordination point for GTP. The interval Gly-384–His-388 is G2. The G3 stretch occupies residues Asp-405 to Gly-408. Residues Asp-405–His-409 and Asn-459–Asp-462 each bind GTP. A G4 region spans residues Asn-459 to Asp-462. A G5 region spans residues Ser-495–Lys-497.

This sequence belongs to the TRAFAC class translation factor GTPase superfamily. Classic translation factor GTPase family. IF-2 subfamily.

Its subcellular location is the cytoplasm. Functionally, one of the essential components for the initiation of protein synthesis. Protects formylmethionyl-tRNA from spontaneous hydrolysis and promotes its binding to the 30S ribosomal subunits. Also involved in the hydrolysis of GTP during the formation of the 70S ribosomal complex. The sequence is that of Translation initiation factor IF-2 from Pseudomonas entomophila (strain L48).